A 538-amino-acid chain; its full sequence is Putative cysteine ligase BshC (538 aa).

A coiled-coil region spans residues 248-268 (ISKYKEVQEGLRNQQEVIKEL).

It belongs to the BshC family.

Functionally, involved in bacillithiol (BSH) biosynthesis. May catalyze the last step of the pathway, the addition of cysteine to glucosamine malate (GlcN-Mal) to generate BSH. This chain is Putative cysteine ligase BshC, found in Bacillus cereus (strain B4264).